A 79-amino-acid polypeptide reads, in one-letter code: Exodeoxyribonuclease 7 small subunit (79 aa).

Belongs to the XseB family. As to quaternary structure, heterooligomer composed of large and small subunits.

It localises to the cytoplasm. The enzyme catalyses Exonucleolytic cleavage in either 5'- to 3'- or 3'- to 5'-direction to yield nucleoside 5'-phosphates.. In terms of biological role, bidirectionally degrades single-stranded DNA into large acid-insoluble oligonucleotides, which are then degraded further into small acid-soluble oligonucleotides. This chain is Exodeoxyribonuclease 7 small subunit, found in Shouchella clausii (strain KSM-K16) (Alkalihalobacillus clausii).